We begin with the raw amino-acid sequence, 320 residues long: MIGKLVRDLKIPDQRHPEKAHRPDNDQPRKPSWIRVKAPTSEGYKETRDIIRGQKLATVCEEAGCPNVGECWGQGHATMMIMGEICTRGCTFCNVATGKPQALDAFEPGRVAHAVSQLGLKHVVVTSVDRDDLEDGGAEHFAQTIRAIRHRAQGTTVEVLVPDFLKCGPEALETVVAARPDVFNHNLETVPGLYPEVRPGARYFHSLRLLQRAKELDPQIFTKSGIMVGLGEDRQGVMQVMDDMRAAGVDFLTIGQYLQPTPKHHRVDRFVTPEEFASYEKAAYGKGFLMVSATPLTRSSYHAGEDFARLRAARLERLGA.

Residues 1–29 (MIGKLVRDLKIPDQRHPEKAHRPDNDQPR) are compositionally biased toward basic and acidic residues. The tract at residues 1 to 32 (MIGKLVRDLKIPDQRHPEKAHRPDNDQPRKPS) is disordered. Residues Cys-60, Cys-65, Cys-71, Cys-86, Cys-90, Cys-93, and Ser-300 each coordinate [4Fe-4S] cluster. Positions 71 to 289 (CWGQGHATMM…EKAAYGKGFL (219 aa)) constitute a Radical SAM core domain.

This sequence belongs to the radical SAM superfamily. Lipoyl synthase family. [4Fe-4S] cluster serves as cofactor.

Its subcellular location is the cytoplasm. The catalysed reaction is [[Fe-S] cluster scaffold protein carrying a second [4Fe-4S](2+) cluster] + N(6)-octanoyl-L-lysyl-[protein] + 2 oxidized [2Fe-2S]-[ferredoxin] + 2 S-adenosyl-L-methionine + 4 H(+) = [[Fe-S] cluster scaffold protein] + N(6)-[(R)-dihydrolipoyl]-L-lysyl-[protein] + 4 Fe(3+) + 2 hydrogen sulfide + 2 5'-deoxyadenosine + 2 L-methionine + 2 reduced [2Fe-2S]-[ferredoxin]. Its pathway is protein modification; protein lipoylation via endogenous pathway; protein N(6)-(lipoyl)lysine from octanoyl-[acyl-carrier-protein]: step 2/2. In terms of biological role, catalyzes the radical-mediated insertion of two sulfur atoms into the C-6 and C-8 positions of the octanoyl moiety bound to the lipoyl domains of lipoate-dependent enzymes, thereby converting the octanoylated domains into lipoylated derivatives. The sequence is that of Lipoyl synthase from Cereibacter sphaeroides (strain ATCC 17025 / ATH 2.4.3) (Rhodobacter sphaeroides).